The sequence spans 292 residues: Protein/nucleic acid deglycase HchA (292 aa).

The span at 1–12 (MSQDVNELSKQP) shows a compositional bias: polar residues. Positions 1-23 (MSQDVNELSKQPTPDKAEDNAFF) are disordered. Cys190 acts as the Nucleophile in catalysis.

Belongs to the peptidase C56 family. HchA subfamily.

It localises to the cytoplasm. The enzyme catalyses N(omega)-(1-hydroxy-2-oxopropyl)-L-arginyl-[protein] + H2O = lactate + L-arginyl-[protein] + H(+). It carries out the reaction N(6)-(1-hydroxy-2-oxopropyl)-L-lysyl-[protein] + H2O = lactate + L-lysyl-[protein] + H(+). It catalyses the reaction S-(1-hydroxy-2-oxopropyl)-L-cysteinyl-[protein] + H2O = lactate + L-cysteinyl-[protein] + H(+). The catalysed reaction is N(omega)-(1-hydroxy-2-oxoethyl)-L-arginyl-[protein] + H2O = L-arginyl-[protein] + glycolate + H(+). The enzyme catalyses N(6)-(1-hydroxy-2-oxoethyl)-L-lysyl-[protein] + H2O = glycolate + L-lysyl-[protein] + H(+). It carries out the reaction S-(1-hydroxy-2-oxoethyl)-L-cysteinyl-[protein] + H2O = glycolate + L-cysteinyl-[protein] + H(+). It catalyses the reaction N(2)-(1-hydroxy-2-oxopropyl)-dGTP + H2O = lactate + dGTP + H(+). The catalysed reaction is N(2)-(1-hydroxy-2-oxopropyl)-GTP + H2O = lactate + GTP + H(+). The enzyme catalyses N(2)-(1-hydroxy-2-oxopropyl)-GDP + H2O = lactate + GDP + H(+). It carries out the reaction N(2)-(1-hydroxy-2-oxopropyl)-GMP + H2O = lactate + GMP + H(+). It catalyses the reaction N(2)-(1-hydroxy-2-oxoethyl)-dGTP + H2O = dGTP + glycolate + H(+). The catalysed reaction is N(2)-(1-hydroxy-2-oxoethyl)-GTP + H2O = glycolate + GTP + H(+). The enzyme catalyses N(2)-(1-hydroxy-2-oxoethyl)-GDP + H2O = glycolate + GDP + H(+). It carries out the reaction N(2)-(1-hydroxy-2-oxoethyl)-GMP + H2O = glycolate + GMP + H(+). It catalyses the reaction an N(2)-(1-hydroxy-2-oxopropyl)-guanosine in RNA + H2O = a guanosine in RNA + lactate + H(+). The catalysed reaction is an N(2)-(1-hydroxy-2-oxopropyl)-2'-deoxyguanosine in DNA + H2O = a 2'-deoxyguanosine in DNA + lactate + H(+). The enzyme catalyses an N(2)-(1-hydroxy-2-oxoethyl)-guanosine in RNA + H2O = a guanosine in RNA + glycolate + H(+). It carries out the reaction an N(2)-(1-hydroxy-2-oxoethyl)-2'-deoxyguanosine in DNA + H2O = a 2'-deoxyguanosine in DNA + glycolate + H(+). Functionally, protein and nucleotide deglycase that catalyzes the deglycation of the Maillard adducts formed between amino groups of proteins or nucleotides and reactive carbonyl groups of glyoxals. Thus, functions as a protein deglycase that repairs methylglyoxal- and glyoxal-glycated proteins, and releases repaired proteins and lactate or glycolate, respectively. Deglycates cysteine, arginine and lysine residues in proteins, and thus reactivates these proteins by reversing glycation by glyoxals. Acts on early glycation intermediates (hemithioacetals and aminocarbinols), preventing the formation of Schiff bases and advanced glycation endproducts (AGE). Also functions as a nucleotide deglycase able to repair glycated guanine in the free nucleotide pool (GTP, GDP, GMP, dGTP) and in DNA and RNA. Is thus involved in a major nucleotide repair system named guanine glycation repair (GG repair), dedicated to reversing methylglyoxal and glyoxal damage via nucleotide sanitization and direct nucleic acid repair. Plays an important role in protecting cells from carbonyl stress. This is Protein/nucleic acid deglycase HchA from Staphylococcus aureus (strain bovine RF122 / ET3-1).